The chain runs to 286 residues: Shikimate dehydrogenase (NADP(+)) (286 aa).

Shikimate contacts are provided by residues threonine 21–serine 23 and threonine 68. Lysine 72 serves as the catalytic Proton acceptor. Aspartate 84 serves as a coordination point for NADP(+). Shikimate is bound by residues asparagine 93 and aspartate 108. Residues glycine 132–alanine 136 and leucine 226 contribute to the NADP(+) site. Tyrosine 228 serves as a coordination point for shikimate. Position 249 (glycine 249) interacts with NADP(+).

The protein belongs to the shikimate dehydrogenase family. As to quaternary structure, homodimer.

It catalyses the reaction shikimate + NADP(+) = 3-dehydroshikimate + NADPH + H(+). Its pathway is metabolic intermediate biosynthesis; chorismate biosynthesis; chorismate from D-erythrose 4-phosphate and phosphoenolpyruvate: step 4/7. Its function is as follows. Involved in the biosynthesis of the chorismate, which leads to the biosynthesis of aromatic amino acids. Catalyzes the reversible NADPH linked reduction of 3-dehydroshikimate (DHSA) to yield shikimate (SA). This Thermosynechococcus vestitus (strain NIES-2133 / IAM M-273 / BP-1) protein is Shikimate dehydrogenase (NADP(+)).